A 335-amino-acid chain; its full sequence is Dolichyl-diphosphooligosaccharide--protein glycosyltransferase subunit MAGT1 (335 aa).

The signal sequence occupies residues 1–29 (MASPRWFWSVCAIAAVALLLVSKVPSASA). Residues 30–184 (QRKKEMVLSE…DVNIRVIRPP (155 aa)) are Extracellular-facing. One can recognise a Thioredoxin domain in the interval 47–175 (WANKRPVIRM…IARWIADRTD (129 aa)). An N-linked (GlcNAc...) asparagine glycan is attached at Asn-71. Cysteines 87 and 90 form a disulfide. The chain crosses the membrane as a helical span at residues 185–205 (NYAGPLMLGLLLAVIGGLVYL). The Cytoplasmic segment spans residues 206-209 (RRSN). The chain crosses the membrane as a helical span at residues 210 to 230 (MEFLFNKTGWAFAALCFVLAM). Over 231–270 (TSGQMWNHIRGPPYAHKNPHTGHVNYIHGSSQAQFVAETH) the chain is Extracellular. The chain crosses the membrane as a helical span at residues 271–291 (IVLLFNGGVTLGMVLLCEAAT). At 292 to 300 (SDMDIGKRR) the chain is on the cytoplasmic side. Residues 301–321 (MMCIAGIGLVVLFFSWMLSIF) traverse the membrane as a helical segment. Topologically, residues 322–335 (RSKYHGYPYSFLMS) are extracellular.

The protein belongs to the OST3/OST6 family. In terms of assembly, accessory component of the STT3B-containing form of the oligosaccharyltransferase (OST) complex. OST exists in two different complex forms which contain common core subunits RPN1, RPN2, OST48, OST4, DAD1 and TMEM258, either STT3A or STT3B as catalytic subunits, and form-specific accessory subunits. OST can form stable complexes with the Sec61 complex or with both the Sec61 and TRAP complexes. The association of TUSC3 or MAGT1 with the STT3B-containing complex seems to be mutually exclusvice. Expressed at high levels in kidney, colon, heart and liver. Expressed at lower levels in intestine, spleen, brain and lung.

Its subcellular location is the cell membrane. It is found in the endoplasmic reticulum. It localises to the endoplasmic reticulum membrane. Its pathway is protein modification; protein glycosylation. Accessory component of the STT3B-containing form of the N-oligosaccharyl transferase (OST) complex which catalyzes the transfer of a high mannose oligosaccharide from a lipid-linked oligosaccharide donor to an asparagine residue within an Asn-X-Ser/Thr consensus motif in nascent polypeptide chains. Involved in N-glycosylation of STT3B-dependent substrates. Specifically required for the glycosylation of a subset of acceptor sites that are near cysteine residues; in this function seems to act redundantly with TUSC3. In its oxidized form proposed to form transient mixed disulfides with a glycoprotein substrate to facilitate access of STT3B to the unmodified acceptor site. Also has oxidoreductase-independent functions in the STT3B-containing OST complex possibly involving substrate recognition. Could indirectly play a role in Mg(2+) transport in epithelial cells. The chain is Dolichyl-diphosphooligosaccharide--protein glycosyltransferase subunit MAGT1 from Mus musculus (Mouse).